Consider the following 76-residue polypeptide: U10-ctenitoxin-Pn1a (76 aa).

The first 15 residues, 1–15 (SFVFYLFTLITVVRA), serve as a signal peptide directing secretion. Residues 16-36 (EEFILENEAEDIAPAVHGESG) constitute a propeptide that is removed on maturation. Cystine bridges form between Cys39/Cys54, Cys46/Cys59, Cys53/Cys73, and Cys61/Cys71.

It belongs to the neurotoxin 02 (plectoxin) family. 09 subfamily. As to expression, expressed by the venom gland.

The protein resides in the secreted. The protein is U10-ctenitoxin-Pn1a of Phoneutria nigriventer (Brazilian armed spider).